Here is a 211-residue protein sequence, read N- to C-terminus: Ubiquitin-conjugating enzyme E2 S-C (211 aa).

One can recognise a UBC core domain in the interval 11-157; sequence HIIRRVYKEV…AKLMTEIHAQ (147 aa). The Glycyl thioester intermediate role is filled by Cys95. The segment at 158–211 is disordered; it reads GSTLRGKDPTDPCSSASATVVSGDGPMAKKHAGDRDKKLAAKKKTDKKRALRRL. Residues 197–211 show a composition bias toward basic residues; the sequence is AAKKKTDKKRALRRL.

Belongs to the ubiquitin-conjugating enzyme family.

The enzyme catalyses S-ubiquitinyl-[E1 ubiquitin-activating enzyme]-L-cysteine + [E2 ubiquitin-conjugating enzyme]-L-cysteine = [E1 ubiquitin-activating enzyme]-L-cysteine + S-ubiquitinyl-[E2 ubiquitin-conjugating enzyme]-L-cysteine.. It functions in the pathway protein modification; protein ubiquitination. Catalyzes the covalent attachment of ubiquitin to other proteins. Acts as an essential factor of the anaphase promoting complex/cyclosome (APC/C), a cell cycle-regulated ubiquitin ligase that controls progression through mitosis. Acts by specifically elongating 'Lys-11'-linked polyubiquitin chains initiated by the E2 enzyme ube2c/ubch10 on APC/C substrates, enhancing the degradation of APC/C substrates by the proteasome and promoting mitotic exit. This Xenopus laevis (African clawed frog) protein is Ubiquitin-conjugating enzyme E2 S-C (ube2s-c).